The following is a 514-amino-acid chain: 1-pyrroline-5-carboxylate dehydrogenase (514 aa).

Active-site residues include Glu286 and Cys320.

It belongs to the aldehyde dehydrogenase family. RocA subfamily.

The enzyme catalyses L-glutamate 5-semialdehyde + NAD(+) + H2O = L-glutamate + NADH + 2 H(+). It participates in amino-acid degradation; L-proline degradation into L-glutamate; L-glutamate from L-proline: step 2/2. This is 1-pyrroline-5-carboxylate dehydrogenase from Staphylococcus aureus (strain MSSA476).